Reading from the N-terminus, the 187-residue chain is UPF0340 protein SPJ_0612 (187 aa).

This sequence belongs to the UPF0340 family.

This chain is UPF0340 protein SPJ_0612, found in Streptococcus pneumoniae (strain JJA).